The primary structure comprises 35 residues: Mu-theraphotoxin-Pm1a (35 aa).

Cystine bridges form between Cys3–Cys17, Cys10–Cys22, and Cys16–Cys29. Residue Phe35 is modified to Phenylalanine amide.

It belongs to the neurotoxin 10 (Hwtx-1) family. 62 (Vatx) subfamily. In terms of tissue distribution, expressed by the venom gland.

The protein localises to the secreted. Functionally, gating-modifier toxin with weak activity on Nav1.7/SCN9A and Nav1.8/SCN10A. Inhibits Nav1.7/SCN9A peak current (IC(50)=334 nM) and shifts the voltage dependence of activation to more depolarised membrane potentials. Shows 21% peak current inhibition (at 10 uM) on Nav1.8/SCN10A sodium channels. In Poecilotheria metallica (Metallic blue ornamental tree spider), this protein is Mu-theraphotoxin-Pm1a.